The sequence spans 388 residues: Biotin synthase (388 aa).

The region spanning 47–277 is the Radical SAM core domain; sequence WFGRRVKLNY…DVEVRIAGGR (231 aa). Positions 65, 69, and 72 each coordinate [4Fe-4S] cluster. Residues Cys109, Cys142, Cys202, and Arg272 each contribute to the [2Fe-2S] cluster site. The tract at residues 335–371 is disordered; the sequence is APAGGCGSEQSAGCGSHEGGGACGSAPAPRTDEARTD.

It belongs to the radical SAM superfamily. Biotin synthase family. Homodimer. [4Fe-4S] cluster is required as a cofactor. Requires [2Fe-2S] cluster as cofactor.

The enzyme catalyses (4R,5S)-dethiobiotin + (sulfur carrier)-SH + 2 reduced [2Fe-2S]-[ferredoxin] + 2 S-adenosyl-L-methionine = (sulfur carrier)-H + biotin + 2 5'-deoxyadenosine + 2 L-methionine + 2 oxidized [2Fe-2S]-[ferredoxin]. It functions in the pathway cofactor biosynthesis; biotin biosynthesis; biotin from 7,8-diaminononanoate: step 2/2. In terms of biological role, catalyzes the conversion of dethiobiotin (DTB) to biotin by the insertion of a sulfur atom into dethiobiotin via a radical-based mechanism. The sequence is that of Biotin synthase from Streptomyces avermitilis (strain ATCC 31267 / DSM 46492 / JCM 5070 / NBRC 14893 / NCIMB 12804 / NRRL 8165 / MA-4680).